The following is a 170-amino-acid chain: MFYPVVQVLIGIILVIILILGFYHMKHKPPKKKCKTDTDCKDKGHHCVRGTCTDKSCLEAAKQDIKDIKLDPTIRSCDYAPGFYRFNATTADLQSPFGKTRIDLGRVWTTWSKEDEYCQSLCLQRKGSIGWEFDELSLGGVGNCYCYTNSHPVLKNSNNTTVMGIARNVL.

A topological domain (intravirion) is located at residue M1. The helical transmembrane segment at 2–22 (FYPVVQVLIGIILVIILILGF) threads the bilayer. Residues 23–170 (YHMKHKPPKK…TVMGIARNVL (148 aa)) are Virion surface-facing.

This sequence belongs to the asfivirus envelope protein p22 family.

The protein localises to the virion membrane. It is found in the host cell membrane. The chain is Envelope protein 166 from Ornithodoros (relapsing fever ticks).